Reading from the N-terminus, the 292-residue chain is Rab effector Noc2 (292 aa).

The 118-residue stretch at 41 to 158 (QRKSQSLSPA…KRSGAWFYKG (118 aa)) folds into the RabBD domain. The FYVE-type zinc finger occupies 89 to 146 (GNGLSQCLLCGEVLGFLGSSSVFCKDCRKKVCTKCGIEASPSQKRPLWLCKICSEQRE). Cysteine 95, cysteine 98, cysteine 112, cysteine 115, cysteine 120, cysteine 123, cysteine 138, and cysteine 141 together coordinate Zn(2+). The tract at residues 175 to 292 (PSFRPLPVEP…RTLAGPRGPR (118 aa)) is disordered. Residues 221–235 (LDDRLRPAGVRDPKG) show a composition bias toward basic and acidic residues. Serine 248 is subject to Phosphoserine. Residues 257–269 (ASCLSGSQSSLAS) show a composition bias toward low complexity.

In terms of assembly, recruited to dense-core vesicles through specific interaction with RAB27A in endocrine cells. Interacts with RAB3A, RAB3B, RAB3C and RAB3D. Interacts with ZYX.

It is found in the cytoplasm. The protein localises to the cytoplasmic vesicle. Its subcellular location is the secretory vesicle membrane. Rab GTPase effector involved in the late steps of regulated exocytosis, both in endocrine and exocrine cells. The chain is Rab effector Noc2 (RPH3AL) from Bos taurus (Bovine).